We begin with the raw amino-acid sequence, 978 residues long: Rab3 GTPase-activating protein catalytic subunit (978 aa).

3 disordered regions span residues 533-554 (EGKK…TASD), 586-621 (HSDT…RLHQ), and 908-936 (EEEP…GREL). Over residues 540-554 (LYSSSESSVNKTASD) the composition is skewed to polar residues. Basic and acidic residues-rich tracts occupy residues 586 to 619 (HSDT…EGRL) and 909 to 922 (EEPK…DRRQ).

Belongs to the Rab3-GAP catalytic subunit family. In terms of assembly, the Rab3 GTPase-activating complex is a heterodimer composed of rab3gap1 and rab3gap2. The Rab3 GTPase-activating complex interacts with DMXL2. Interacts with LMAN1.

The protein resides in the cytoplasm. The protein localises to the endoplasmic reticulum. It localises to the golgi apparatus. Its subcellular location is the cis-Golgi network. Functionally, catalytic subunit of the Rab3 GTPase-activating (Rab3GAP) complex composed of rab3gap1 and rab3gap2, which has GTPase-activating protein (GAP) activity towards various Rab3 subfamily members (RAB3A, RAB3B, RAB3C and RAB3D), RAB5A and RAB43, and guanine nucleotide exchange factor (GEF) activity towards RAB18. As part of the Rab3GAP complex, acts as a GAP for Rab3 proteins by converting active RAB3-GTP to the inactive form RAB3-GDP. Rab3 proteins are involved in regulated exocytosis of neurotransmitters and hormones. The Rab3GAP complex, acts as a GEF for RAB18 by promoting the conversion of inactive RAB18-GDP to the active form RAB18-GTP. Recruits and stabilizes RAB18 at the cis-Golgi membrane where RAB18 is most likely activated. Also involved in RAB18 recruitment at the endoplasmic reticulum (ER) membrane where it maintains proper ER structure. Required for normal eye and brain development. May participate in neurodevelopmental processes such as proliferation, migration and differentiation before synapse formation, and non-synaptic vesicular release of neurotransmitters. The sequence is that of Rab3 GTPase-activating protein catalytic subunit (rab3gap1) from Xenopus laevis (African clawed frog).